A 177-amino-acid chain; its full sequence is Large ribosomal subunit protein uL6 (177 aa).

It belongs to the universal ribosomal protein uL6 family. In terms of assembly, part of the 50S ribosomal subunit.

Its function is as follows. This protein binds to the 23S rRNA, and is important in its secondary structure. It is located near the subunit interface in the base of the L7/L12 stalk, and near the tRNA binding site of the peptidyltransferase center. The polypeptide is Large ribosomal subunit protein uL6 (Hydrogenovibrio crunogenus (strain DSM 25203 / XCL-2) (Thiomicrospira crunogena)).